Reading from the N-terminus, the 237-residue chain is MLGGSLGSRLLRGVGGTRGQFRARGVREGGAAMAAGESMAQRMVWVDLEMTGLDIEKDQIIEMACLITDSDLNILAEGPNLIIKQPDELLDSMSDWCKEHHGKSGLTKAVKESTMTLQQAEYEFLSFVRQQTPPGLCPLAGNSVHADKKFLDKYMPQFMKHLHYRIIDVSTVKELCRRWYPEEYEFAPKKAASHRALDDISESIKELQFYRNNIFKKKTDEKKRKIIENGENEKTVS.

The transit peptide at 1–25 (MLGGSLGSRLLRGVGGTRGQFRARG) directs the protein to the mitochondrion. In terms of domain architecture, Exonuclease spans 43 to 207 (MVWVDLEMTG…DDISESIKEL (165 aa)). Residues Asp47 and Glu49 each coordinate Mg(2+). A Phosphoserine modification is found at Ser92. Tyr122 bears the Phosphotyrosine mark. Asp147 contributes to the Mg(2+) binding site. Lys173 bears the N6-acetyllysine mark. His194 is an active-site residue. Residue Asp199 coordinates Mg(2+).

Belongs to the oligoribonuclease family. In terms of assembly, homodimer. Homotetramer. Mn(2+) serves as cofactor. The cofactor is Mg(2+).

Its subcellular location is the mitochondrion intermembrane space. The protein localises to the mitochondrion matrix. The protein resides in the mitochondrion. It localises to the cytoplasm. It is found in the nucleus. Its function is as follows. 3'-to-5'exoribonuclease that preferentially degrades DNA and RNA oligonucleotides composed of only two nucleotides. Binds and degrades longer oligonucleotides with a lower affinity. Plays dual roles in mitochondria, scavenging nanoRNAs (small RNA oligonucleotides of &lt;5 nucleotides) that are produced by the degradosome and clearing short RNAs that are generated by RNA processing. Essential for correct initiation of mitochondrial transcription, degrading mitochondrial RNA dinucleotides to prevent RNA-primed transcription at non-canonical sites in the mitochondrial genome. Essential for embryonic development. This chain is Oligoribonuclease, mitochondrial (REXO2), found in Bos taurus (Bovine).